We begin with the raw amino-acid sequence, 336 residues long: MEEELKSFVKVWGSAIISVSYCYYIPSKIKSGVHRLLSVLPVCVLFLVLPLFFVFTIFSSTTAFCLSILANFKLILFAFDKGPLLPLPANLFRFICFTCLPIKIQKNPNSQNHLPKWVFFCKAAIFGVLLNVHNYKSSLPPILLICLYPLHLYLVLDVLLTIVNALLTIILGCDLEPHFNEPYLATSLQDFWGRRWNLMVPAIFRPGVYHPMRSVCQPQMRSDWARFMGCWTTFFVSGLIHELVYFYINRETPTWEVTWFFVLQGVCTAMEKAVKRKTRWSLSPMLSRLITVGFLVVTGYFLFFRQIERSNMLERRATEASLIIDFVKHKLSNFLL.

8 helical membrane passes run 7-27 (SFVKVWGSAIISVSYCYYIPS), 38-58 (SVLPVCVLFLVLPLFFVFTIF), 59-79 (SSTTAFCLSILANFKLILFAF), 82-102 (GPLLPLPANLFRFICFTCLPI), 117-135 (WVFFCKAAIFGVLLNVHNY), 152-172 (LYLVLDVLLTIVNALLTIILG), 228-248 (MGCWTTFFVSGLIHELVYFYI), and 284-304 (PMLSRLITVGFLVVTGYFLFF).

It belongs to the wax synthase family.

Its subcellular location is the membrane. The catalysed reaction is a long chain fatty alcohol + a fatty acyl-CoA = a wax ester + CoA. Functionally, catalyzes the final step in the synthesis of long-chain linear esters (waxes). This chain is Probable long-chain-alcohol O-fatty-acyltransferase 8, found in Arabidopsis thaliana (Mouse-ear cress).